Consider the following 231-residue polypeptide: MKRAVVVFSGGQDSTTCLAQARHQYDEVHCVTFDYGQRHRAEIDVARELALKLGARAHKVLDVTLLNELAVSSLTRDSIPVPDYEPNADGIPNTFVPGRNILFLTLAAIYAYQVKAEAVITGVCETDFSGYPDCRDEFVKALNHAVNLGMAKDIRFETPLMWIDKAETWALADYWGQLDLVREETLTCYNGIKGDGCGHCAACNLRANGLNHYLSNKAAVMAAMKQKTGLR.

An ATP-binding site is contributed by 8 to 18; that stretch reads FSGGQDSTTCL. The Zn(2+) site is built by Cys-188, Cys-197, Cys-200, and Cys-203.

Belongs to the QueC family. Zn(2+) is required as a cofactor.

The enzyme catalyses 7-carboxy-7-deazaguanine + NH4(+) + ATP = 7-cyano-7-deazaguanine + ADP + phosphate + H2O + H(+). It participates in purine metabolism; 7-cyano-7-deazaguanine biosynthesis. Functionally, catalyzes the ATP-dependent conversion of 7-carboxy-7-deazaguanine (CDG) to 7-cyano-7-deazaguanine (preQ(0)). This Salmonella choleraesuis (strain SC-B67) protein is 7-cyano-7-deazaguanine synthase.